A 454-amino-acid chain; its full sequence is MLNILEVHETNQMIEQEKLDVRTITMGIDLMDCVSTDLQTTCDLIYNKITSYAKDLVSTGESIERDFGIPIVNKRITVTPIALVGASCCKTSADFVQIAHALDRAAKTVGVDLIGGYSALVSKSMTPAEELLIRSLPAALSETDIVCSSVNVGSTKTGIDMNSVELLGHIIKEIAEATADIDSYGCVKFVAFCNAPDDNPFMAGGFHGVTEGDAVINVGVSGPGVVSRALDAAKGKDFEFLCETIKRTAFKITRVGQLVAQEASKRLGIPFGIIDLSLAPTPAVGDSVGEVLEKIGLAQVGAPGTTAALAMLNDQVKKGGIMASSYVGGLSGAFIPVSEDKNMIDAAESGCLTIEKLEAMTCVCSVGLDMIAIPGDTTASTISGIIADEAAIGMVNQKTTAVRVIPVVGKTVGQMANFGGLMGYAPIMPVNTASCEAFVTRGGRIPAPIHSFKN.

The protein belongs to the UPF0210 family. As to quaternary structure, homodimer.

The polypeptide is UPF0210 protein BLA_0552 (Bifidobacterium animalis subsp. lactis (strain AD011)).